Reading from the N-terminus, the 255-residue chain is MNQILLCSQILLLLFAVANCDGEHQLDSSMDLKSDSTKSAVLKNVAPKNDATQAEIAKDDVALKSGKKGDYVMDIDVCTMPLDDYPINNSKSRKNSSTLPSQILTDKPNQGSNQIALKALKHRLLMEQNNNLFLRNHSVSLMNEIEARKTDIIQARQLNIDLELELEALKRKLSEMNAQNARKPTKSCKKRPSKDIAPPANQLQEVIVKNTYRNKYLTLLTQLAQKINYEIANVNNPATDVPTGKSPSEGNPSTT.

The first 18 residues, 1 to 18 (MNQILLCSQILLLLFAVA), serve as a signal peptide directing secretion. Positions 86 to 110 (PINNSKSRKNSSTLPSQILTDKPNQ) are disordered. Positions 87–110 (INNSKSRKNSSTLPSQILTDKPNQ) are enriched in polar residues. 3 N-linked (GlcNAc...) asparagine glycosylation sites follow: asparagine 88, asparagine 95, and asparagine 136. 2 disordered regions span residues 177–197 (NAQN…KDIA) and 235–255 (NNPA…PSTT). Basic residues predominate over residues 183–192 (KPTKSCKKRP). The span at 245–255 (KSPSEGNPSTT) shows a compositional bias: polar residues.

It undergoes several cleavages as it is secreted and it is further processed in the recipient female. In terms of tissue distribution, main cells of the accessory glands of males.

The protein resides in the secreted. It is found in the extracellular space. This protein is transferred from male to female's hemolymph during mating, affecting egglaying and behavior after mating. In Drosophila simulans (Fruit fly), this protein is Accessory gland-specific peptide 26Aa (Acp26Aa).